The following is a 462-amino-acid chain: MESERLESHLLNKQEEEASSFTSGLLLSTSVVVAGSFCYGCAMSYSSPAQSKIMEELGLSVADYSFFTSVMTLGGMITAVFSGKISALVGRRQTMWISDVCCIFGWLAVAFAHDIIMLNTGRLFLGFGVGLISYVVPVYIAEITPKTFRGGFSYSNQLLQCLGISLMFFTGNFFHWRTLALLSAIPSAFQVICLFFIPESPRWLAMYGQDQELEVSLKKLRGENSDILKEAAEIRETVEISRKESQSGIRDLFHIGNAHSLIIGLGLMLLQQFCGSAAISAYAARIFDKAGFPSDIGTTILAVILIPQSIVVMLTVDRWGRRPLLMISSIGMCICSFFIGLSYYLQKNGEFQKLCSVMLIVGLVGYVSSFGIGLGGLPWVIMSEIFPVNVKITAGSLVTMSNWFFNWIIIYSFNFMIQWSASGTYFIFSGVSLVTIVFIWTLVPETKGRTLEEIQTSLVRLS.

12 consecutive transmembrane segments (helical) span residues 23 to 43, 70 to 90, 96 to 116, 123 to 143, 156 to 176, 178 to 198, 261 to 281, 296 to 316, 324 to 344, 357 to 377, 397 to 417, and 423 to 443; these read SGLLLSTSVVVAGSFCYGCAM, VMTLGGMITAVFSGKISALVG, WISDVCCIFGWLAVAFAHDII, LFLGFGVGLISYVVPVYIAEI, NQLLQCLGISLMFFTGNFFHW, TLALLSAIPSAFQVICLFFIP, LIIGLGLMLLQQFCGSAAISA, IGTTILAVILIPQSIVVMLTV, LLMISSIGMCICSFFIGLSYY, VMLIVGLVGYVSSFGIGLGGL, LVTMSNWFFNWIIIYSFNFMI, and GTYFIFSGVSLVTIVFIWTLV.

Belongs to the major facilitator superfamily. Sugar transporter (TC 2.A.1.1) family.

It localises to the membrane. Its function is as follows. Sugar transporter. The sequence is that of Sugar transporter ERD6-like 2 (SUGTL3) from Arabidopsis thaliana (Mouse-ear cress).